The sequence spans 226 residues: Lipoprotein-releasing system ATP-binding protein LolD (226 aa).

In terms of domain architecture, ABC transporter spans 5–225 (LELVEIERHF…TLKEKKIVEL (221 aa)). 41-48 (APSGAGKS) lines the ATP pocket.

It belongs to the ABC transporter superfamily. Lipoprotein translocase (TC 3.A.1.125) family. In terms of assembly, the complex is composed of two ATP-binding proteins (LolD) and two transmembrane proteins (LolC and LolE).

It is found in the cell inner membrane. Part of the ABC transporter complex LolCDE involved in the translocation of mature outer membrane-directed lipoproteins, from the inner membrane to the periplasmic chaperone, LolA. Responsible for the formation of the LolA-lipoprotein complex in an ATP-dependent manner. The sequence is that of Lipoprotein-releasing system ATP-binding protein LolD from Bartonella quintana (strain Toulouse) (Rochalimaea quintana).